Reading from the N-terminus, the 147-residue chain is Phosphoribosyl-AMP cyclohydrolase (147 aa).

Mg(2+) is bound at residue D91. C92 contributes to the Zn(2+) binding site. The Mg(2+) site is built by D93 and D95. C108 and C115 together coordinate Zn(2+).

It belongs to the PRA-CH family. In terms of assembly, homodimer. Requires Mg(2+) as cofactor. Zn(2+) serves as cofactor.

It localises to the cytoplasm. It carries out the reaction 1-(5-phospho-beta-D-ribosyl)-5'-AMP + H2O = 1-(5-phospho-beta-D-ribosyl)-5-[(5-phospho-beta-D-ribosylamino)methylideneamino]imidazole-4-carboxamide. Its pathway is amino-acid biosynthesis; L-histidine biosynthesis; L-histidine from 5-phospho-alpha-D-ribose 1-diphosphate: step 3/9. Its function is as follows. Catalyzes the hydrolysis of the adenine ring of phosphoribosyl-AMP. This chain is Phosphoribosyl-AMP cyclohydrolase, found in Rhodopseudomonas palustris (strain BisB5).